The sequence spans 750 residues: Probable methylmalonyl-CoA mutase large subunit (750 aa).

Residues tyrosine 91, methionine 94, threonine 101, arginine 103, tyrosine 105, and serine 130 each coordinate (R)-methylmalonyl-CoA. The cob(II)alamin site is built by phenylalanine 133 and alanine 155. Residues threonine 211 and glutamine 213 each contribute to the (R)-methylmalonyl-CoA site. Positions 222 and 223 each coordinate cob(II)alamin. Arginine 223, histidine 260, arginine 299, and serine 301 together coordinate (R)-methylmalonyl-CoA. Cob(II)alamin contacts are provided by glycine 349, glutamate 386, alanine 389, glycine 628, histidine 629, aspartate 630, arginine 631, serine 674, leucine 676, glycine 705, and threonine 728. A B12-binding domain is found at 616-748; sequence RPRILIAKMG…HRLAERLGYT (133 aa).

The protein belongs to the methylmalonyl-CoA mutase family. In terms of assembly, heterodimer of an alpha and a beta chain. It depends on adenosylcob(III)alamin as a cofactor.

It carries out the reaction (R)-methylmalonyl-CoA = succinyl-CoA. It participates in metabolic intermediate metabolism; propanoyl-CoA degradation; succinyl-CoA from propanoyl-CoA: step 3/3. Functionally, catalyzes the isomerization of succinyl-CoA to methylmalonyl-CoA during synthesis of propionate from tricarboxylic acid-cycle intermediates. This is Probable methylmalonyl-CoA mutase large subunit (mutB) from Mycobacterium bovis (strain ATCC BAA-935 / AF2122/97).